Reading from the N-terminus, the 72-residue chain is SRY-related protein ADW5 (72 aa).

The segment at residues 1–69 (VKRPMNAFMV…KHMADYPDYK (69 aa)) is a DNA-binding region (HMG box).

It localises to the nucleus. This is SRY-related protein ADW5 from Alligator mississippiensis (American alligator).